The sequence spans 491 residues: UDP-N-acetylmuramate--L-alanine ligase (491 aa).

126–132 (GTHGKTT) is an ATP binding site.

Belongs to the MurCDEF family.

The protein localises to the cytoplasm. The enzyme catalyses UDP-N-acetyl-alpha-D-muramate + L-alanine + ATP = UDP-N-acetyl-alpha-D-muramoyl-L-alanine + ADP + phosphate + H(+). It functions in the pathway cell wall biogenesis; peptidoglycan biosynthesis. Cell wall formation. The sequence is that of UDP-N-acetylmuramate--L-alanine ligase from Escherichia coli O1:K1 / APEC.